The primary structure comprises 720 residues: Polyribonucleotide nucleotidyltransferase (720 aa).

Residues Asp485 and Asp491 each coordinate Mg(2+). In terms of domain architecture, KH spans 552 to 615 (PRIHTIKINP…EAIRRIQALT (64 aa)). The S1 motif domain maps to 621–689 (GRIYEGKVTR…RQGRIRLSIK (69 aa)). The disordered stretch occupies residues 697–720 (PAAESVAESAPAQEAVVEQVPMTE). Over residues 698–720 (AAESVAESAPAQEAVVEQVPMTE) the composition is skewed to low complexity.

The protein belongs to the polyribonucleotide nucleotidyltransferase family. As to quaternary structure, component of the RNA degradosome, which is a multiprotein complex involved in RNA processing and mRNA degradation. Mg(2+) serves as cofactor.

It is found in the cytoplasm. It catalyses the reaction RNA(n+1) + phosphate = RNA(n) + a ribonucleoside 5'-diphosphate. Involved in mRNA degradation. Catalyzes the phosphorolysis of single-stranded polyribonucleotides processively in the 3'- to 5'-direction. The chain is Polyribonucleotide nucleotidyltransferase from Tolumonas auensis (strain DSM 9187 / NBRC 110442 / TA 4).